A 217-amino-acid polypeptide reads, in one-letter code: Rhicadhesin receptor (217 aa).

The first 20 residues, methionine 1–alanine 20, serve as a signal peptide directing secretion. A disulfide bridge connects residues cysteine 30 and cysteine 45. N-linked (GlcNAc...) asparagine glycosylation is found at asparagine 50 and asparagine 68. A Cupin type-1 domain is found at serine 58 to glutamine 207. The Mn(2+) site is built by histidine 107, histidine 109, glutamate 114, and histidine 153.

Belongs to the germin family. In terms of processing, glycosylated.

It is found in the secreted. It localises to the extracellular space. The protein localises to the apoplast. The protein resides in the cell wall. Its function is as follows. Putative receptor for bacterial rhicadhesin, an attachment protein of rhizobiaceae. The sequence is that of Rhicadhesin receptor (GER1) from Pisum sativum (Garden pea).